Here is a 235-residue protein sequence, read N- to C-terminus: UPF0502 protein Bmul_3231/BMULJ_05293 (235 aa).

Belongs to the UPF0502 family.

The sequence is that of UPF0502 protein Bmul_3231/BMULJ_05293 from Burkholderia multivorans (strain ATCC 17616 / 249).